The sequence spans 282 residues: Dihydroorotate dehydrogenase B (NAD(+)), electron transfer subunit homolog (282 aa).

Positions 2 to 100 (GGTALNEIVK…VGPLGNPSEI (99 aa)) constitute an FAD-binding FR-type domain. [2Fe-2S] cluster contacts are provided by cysteine 225, cysteine 228, and cysteine 240.

It belongs to the PyrK family. It depends on [2Fe-2S] cluster as a cofactor. FAD serves as cofactor.

The sequence is that of Dihydroorotate dehydrogenase B (NAD(+)), electron transfer subunit homolog from Thermotoga maritima (strain ATCC 43589 / DSM 3109 / JCM 10099 / NBRC 100826 / MSB8).